The primary structure comprises 532 residues: Fatty-acid amide hydrolase 2-A (532 aa).

A helical membrane pass occupies residues 9 to 29 (FLGRLLRAVVWILFAAFKLFA). Active-site charge relay system residues include Lys129 and Ser204. The Acyl-ester intermediate role is filled by Ser228.

Belongs to the amidase family.

Its subcellular location is the membrane. The catalysed reaction is N-(5Z,8Z,11Z,14Z-eicosatetraenoyl)-ethanolamine + H2O = ethanolamine + (5Z,8Z,11Z,14Z)-eicosatetraenoate. It carries out the reaction (9Z)-octadecenamide + H2O = (9Z)-octadecenoate + NH4(+). The protein is Fatty-acid amide hydrolase 2-A (faah2a) of Danio rerio (Zebrafish).